Here is a 440-residue protein sequence, read N- to C-terminus: MVSSNQALLISPSIPYGEIAVPPSKSHSLRAILFASLSKGTSIIENCLFSPDSQTMLTACEKMGAHVRRIGDSLHIQGNPDPHHCHPPYFHMGNSGIALRFLTALSTLSPTPTLITGSHTLKRRPIAPLLSSLKQLGAHIRQKTSSSIPFTIHGPLSPGHVTISGQDSQYASALAITAALAPYPLSFSIENLKERPWFDLTLDWLHSLNISFLRDQDSLTFPGGQSLESFSYSVPGDYSSAAFLASFGLLSSSSKPTILRNLPSQDSQGDKLLFSLLKQLGAHILIEKHHIEMHPSSFSGGEIDMDPFIDALPILAVLCCFAKNPSRLYNALGAKDKESNRIEAIAHELQKMGGSVHPTRDGLYIEPSRLHGAVVDSHNDHRIAMALAVAGVHASSGQTLLCNTQCINKSFPHFVIAAQTLHANVRHYQADFPLRSSFCR.

The 3-phosphoshikimate site is built by Lys25, Ser26, and Arg30. Lys25 serves as a coordination point for phosphoenolpyruvate. Phosphoenolpyruvate contacts are provided by Gly96 and Arg124. Positions 168, 169, 310, and 337 each coordinate 3-phosphoshikimate. Gln169 is a binding site for phosphoenolpyruvate. Residue Asp310 is the Proton acceptor of the active site. 3 residues coordinate phosphoenolpyruvate: Arg341, Arg382, and Lys409.

It belongs to the EPSP synthase family. Monomer.

It localises to the cytoplasm. The enzyme catalyses 3-phosphoshikimate + phosphoenolpyruvate = 5-O-(1-carboxyvinyl)-3-phosphoshikimate + phosphate. Its pathway is metabolic intermediate biosynthesis; chorismate biosynthesis; chorismate from D-erythrose 4-phosphate and phosphoenolpyruvate: step 6/7. Its function is as follows. Catalyzes the transfer of the enolpyruvyl moiety of phosphoenolpyruvate (PEP) to the 5-hydroxyl of shikimate-3-phosphate (S3P) to produce enolpyruvyl shikimate-3-phosphate and inorganic phosphate. The polypeptide is 3-phosphoshikimate 1-carboxyvinyltransferase (Chlamydia trachomatis serovar L2 (strain ATCC VR-902B / DSM 19102 / 434/Bu)).